A 64-amino-acid chain; its full sequence is Purotoxin-2 (64 aa).

The tract at residues 1–44 (AKACTPLLHDCSHDRHSCCRGDMFKYVCDCFYPEGEDKTEVCSC) is knottin domain. Disulfide bonds link C4/C19, C11/C28, C18/C44, and C30/C42. The segment at 45–64 (QQPKSHKIAEKIIDKAKTTL) is linear cationic cytotoxin domain. Position 64 is a leucine amide (L64).

The protein belongs to the neurotoxin 19 (CSTX) family. 05 (U4-Lctx) subfamily. In terms of processing, amidation at Leu-64 is not mandatory for activity on P2RX3. Expressed by the venom gland.

Its subcellular location is the secreted. Its function is as follows. Enhances the high-affinity desensitization of human P2RX3 purinoceptors. At 50 nM, the toxin decreases the IC(50) for ambient ATP from 2.67 nM to 0.77 nM in human P2RX3. The sequence is that of Purotoxin-2 from Alopecosa marikovskyi (Wolf spider).